The sequence spans 261 residues: Triosephosphate isomerase (261 aa).

10–12 (NWK) contacts substrate. The active-site Electrophile is His100. Glu172 (proton acceptor) is an active-site residue. Substrate-binding positions include Gly178, Ser218, and 239–240 (GG).

The protein belongs to the triosephosphate isomerase family. In terms of assembly, homodimer.

It localises to the cytoplasm. It carries out the reaction D-glyceraldehyde 3-phosphate = dihydroxyacetone phosphate. The protein operates within carbohydrate biosynthesis; gluconeogenesis. It participates in carbohydrate degradation; glycolysis; D-glyceraldehyde 3-phosphate from glycerone phosphate: step 1/1. Involved in the gluconeogenesis. Catalyzes stereospecifically the conversion of dihydroxyacetone phosphate (DHAP) to D-glyceraldehyde-3-phosphate (G3P). The chain is Triosephosphate isomerase from Mycobacterium bovis (strain BCG / Pasteur 1173P2).